A 173-amino-acid polypeptide reads, in one-letter code: uncharacterized protein (173 aa).

Positions 1–11 are enriched in basic and acidic residues; that stretch reads MLCAKNKKDPK. A disordered region spans residues 1 to 173; sequence MLCAKNKKDP…EKMEKSEKAY (173 aa). The segment covering 17–41 has biased composition (polar residues); that stretch reads FSETSKVQNVQNTQPKPAAPSQMSI. Composition is skewed to basic and acidic residues over residues 56–109 and 120–144; these read KSVE…KADN and AKKEQEEENPKTDLESHKDEAEAKK. Residues 145-156 are compositionally biased toward basic residues; sequence KESRRQKKMRNK. Residues 157–173 are compositionally biased toward basic and acidic residues; sequence NSKEGSVEKMEKSEKAY.

This is an uncharacterized protein from Caenorhabditis elegans.